The primary structure comprises 429 residues: G2/mitotic-specific cyclin-B1 (429 aa).

Residues 1–14 (MALRVTRNTKLNTE) are compositionally biased toward polar residues. 2 disordered regions span residues 1–21 (MALR…KVSM) and 71–128 (TGKV…PMET). Lysine 73 is subject to N6-acetyllysine. Residues 92 to 106 (PEVELAEPEPEPEPV) are compositionally biased toward acidic residues. Serine 122 carries the phosphoserine; by CDK1 modification. Position 124 is a phosphoserine (serine 124). Residue serine 129 is modified to Phosphoserine; by PLK1. Serine 143 carries the post-translational modification Phosphoserine. Interaction with CDK2 stretches follow at residues 165–173 (EYVKDIYAY) and 254–257 (YEEM). A Phosphothreonine modification is found at threonine 317.

The protein belongs to the cyclin family. Cyclin AB subfamily. In terms of assembly, interacts with the CDC2 protein kinase to form a serine/threonine kinase holoenzyme complex also known as maturation promoting factor (MPF). The cyclin subunit imparts substrate specificity to the complex. Binds HEI10. Interacts with catalytically active RALBP1 and CDC2 during mitosis to form an endocytotic complex during interphase. Interacts with CCNF; interaction is required for nuclear localization. Interacts with CDK5RAP3. Interacts with RFPL4A and UBE2A. Interacts with INCA1. Ubiquitinated by the SCF(NIPA) complex during interphase, leading to its destruction. Not ubiquitinated during G2/M phases. In terms of processing, phosphorylated by PLK1 at Ser-129 on centrosomes during prophase: phosphorylation by PLK1 does not cause nuclear import. Phosphorylation at Ser-143 was also reported to be mediated by PLK1 but Ser-129 seems to be the primary phosphorylation site.

The protein localises to the cytoplasm. It is found in the nucleus. It localises to the cytoskeleton. The protein resides in the microtubule organizing center. Its subcellular location is the centrosome. Its function is as follows. Essential for the control of the cell cycle at the G2/M (mitosis) transition. The chain is G2/mitotic-specific cyclin-B1 (CCNB1) from Cricetulus griseus (Chinese hamster).